Consider the following 187-residue polypeptide: MWLIVGLGNPGGEYKLTRHNIGFMAVDFLMEGLGNPPIKNQFKAEIAQAKIKDHPVIFCKPQTYMNLSGESVQPLMGFYKIPLERLIVIHDEIDQPFAQMKIQKNRGHGGHNGIKSISGLMGSMDYTRLRLGVGRPANPNIPVPDYVLGKFTKEEFAQMPDFLNKAGDAVESIILDGIQKASTKFNT.

Position 14 (Y14) interacts with tRNA. H19 acts as the Proton acceptor in catalysis. The tRNA site is built by Y64, N66, and N112.

Belongs to the PTH family. In terms of assembly, monomer.

The protein localises to the cytoplasm. The catalysed reaction is an N-acyl-L-alpha-aminoacyl-tRNA + H2O = an N-acyl-L-amino acid + a tRNA + H(+). Hydrolyzes ribosome-free peptidyl-tRNAs (with 1 or more amino acids incorporated), which drop off the ribosome during protein synthesis, or as a result of ribosome stalling. Functionally, catalyzes the release of premature peptidyl moieties from peptidyl-tRNA molecules trapped in stalled 50S ribosomal subunits, and thus maintains levels of free tRNAs and 50S ribosomes. The sequence is that of Peptidyl-tRNA hydrolase from Bdellovibrio bacteriovorus (strain ATCC 15356 / DSM 50701 / NCIMB 9529 / HD100).